The primary structure comprises 257 residues: Thiazole synthase (257 aa).

Catalysis depends on Lys98, which acts as the Schiff-base intermediate with DXP. Residues Gly159, Ala185 to Gly186, and Asn207 to Thr208 contribute to the 1-deoxy-D-xylulose 5-phosphate site.

Belongs to the ThiG family. As to quaternary structure, homotetramer. Forms heterodimers with either ThiH or ThiS.

The protein resides in the cytoplasm. It catalyses the reaction [ThiS sulfur-carrier protein]-C-terminal-Gly-aminoethanethioate + 2-iminoacetate + 1-deoxy-D-xylulose 5-phosphate = [ThiS sulfur-carrier protein]-C-terminal Gly-Gly + 2-[(2R,5Z)-2-carboxy-4-methylthiazol-5(2H)-ylidene]ethyl phosphate + 2 H2O + H(+). It functions in the pathway cofactor biosynthesis; thiamine diphosphate biosynthesis. Catalyzes the rearrangement of 1-deoxy-D-xylulose 5-phosphate (DXP) to produce the thiazole phosphate moiety of thiamine. Sulfur is provided by the thiocarboxylate moiety of the carrier protein ThiS. In vitro, sulfur can be provided by H(2)S. In Anaeromyxobacter dehalogenans (strain 2CP-C), this protein is Thiazole synthase.